Consider the following 376-residue polypeptide: PqqA peptide cyclase (376 aa).

The Radical SAM core domain occupies V4 to D219. Residues C18, C22, and C25 each coordinate [4Fe-4S] cluster.

It belongs to the radical SAM superfamily. PqqE family. As to quaternary structure, interacts with PqqD. The interaction is necessary for activity of PqqE. It depends on [4Fe-4S] cluster as a cofactor.

It carries out the reaction [PQQ precursor protein] + S-adenosyl-L-methionine = E-Y cross-linked-[PQQ precursor protein] + 5'-deoxyadenosine + L-methionine + H(+). Its pathway is cofactor biosynthesis; pyrroloquinoline quinone biosynthesis. In terms of biological role, catalyzes the cross-linking of a glutamate residue and a tyrosine residue in the PqqA protein as part of the biosynthesis of pyrroloquinoline quinone (PQQ). The chain is PqqA peptide cyclase from Xanthomonas campestris pv. campestris (strain B100).